Here is a 147-residue protein sequence, read N- to C-terminus: Small ribosomal subunit protein uS12 (147 aa).

Belongs to the universal ribosomal protein uS12 family. In terms of assembly, part of the 30S ribosomal subunit.

In terms of biological role, with S4 and S5 plays an important role in translational accuracy. Located at the interface of the 30S and 50S subunits. In Pyrobaculum arsenaticum (strain DSM 13514 / JCM 11321 / PZ6), this protein is Small ribosomal subunit protein uS12.